Reading from the N-terminus, the 200-residue chain is TATA-box-binding protein (200 aa).

2 repeat units span residues 25–101 and 115–192.

This sequence belongs to the TBP family. As to quaternary structure, belongs to the TFIID complex together with the TBP-associated factors (TAFs). Binds DNA as monomer.

It localises to the nucleus. General transcription factor that functions at the core of the DNA-binding multiprotein factor TFIID. Binding of TFIID to the TATA box is the initial transcriptional step of the pre-initiation complex (PIC), playing a role in the activation of eukaryotic genes transcribed by RNA polymerase II. This is TATA-box-binding protein from Nicotiana tabacum (Common tobacco).